Here is a 493-residue protein sequence, read N- to C-terminus: Probable cytosol aminopeptidase (493 aa).

Residues Lys257 and Asp262 each contribute to the Mn(2+) site. Residue Lys269 is part of the active site. Positions 281, 341, and 343 each coordinate Mn(2+). Residue Arg345 is part of the active site.

This sequence belongs to the peptidase M17 family. Mn(2+) is required as a cofactor.

It is found in the cytoplasm. It carries out the reaction Release of an N-terminal amino acid, Xaa-|-Yaa-, in which Xaa is preferably Leu, but may be other amino acids including Pro although not Arg or Lys, and Yaa may be Pro. Amino acid amides and methyl esters are also readily hydrolyzed, but rates on arylamides are exceedingly low.. It catalyses the reaction Release of an N-terminal amino acid, preferentially leucine, but not glutamic or aspartic acids.. Presumably involved in the processing and regular turnover of intracellular proteins. Catalyzes the removal of unsubstituted N-terminal amino acids from various peptides. The chain is Probable cytosol aminopeptidase from Synechococcus sp. (strain WH7803).